A 255-amino-acid polypeptide reads, in one-letter code: MLKFVVLLCAISCALGAAVPEGMVPQLDGRIVGGVATTISSFPWQISLQRSGSHSCGGSVYNSRIIVTAAHCLQSVSTSVLKVRRGSSYWNSGGVVVSVAAFKNHEGYNPKTMVNDIAVIRLSSSLTMSSTIKAIALTTAAPANGAAATVSGWGTTSSGGSIPAQLRYVDLKIVGRTQCASSTYGYGSQIKPSMICAYTVGKDSCQGDSGGPLVSGGRLVGVVSWGYGCAFANYPGVYADVAALRTWVVSAASSV.

Residues 1–16 form the signal peptide; the sequence is MLKFVVLLCAISCALG. The propeptide at 17 to 30 is activation peptide; that stretch reads AAVPEGMVPQLDGR. The Peptidase S1 domain maps to 31 to 253; the sequence is IVGGVATTIS…LRTWVVSAAS (223 aa). A disulfide bridge links Cys-56 with Cys-72. Catalysis depends on charge relay system residues His-71 and Asp-116. Disulfide bonds link Cys-179–Cys-196 and Cys-205–Cys-229. The active-site Charge relay system is Ser-209.

It belongs to the peptidase S1 family.

The protein resides in the secreted. It is found in the extracellular space. It carries out the reaction Preferential cleavage: Arg-|-Xaa, Lys-|-Xaa.. This chain is Trypsin alpha-4, found in Lucilia cuprina (Green bottle fly).